Consider the following 623-residue polypeptide: Myosin light chain kinase 2, skeletal/cardiac muscle (623 aa).

Disordered regions lie at residues M1–P179 and G204–T251. A2 is subject to N-acetylalanine. The span at A20–A31 shows a compositional bias: low complexity. 2 stretches are compositionally biased toward basic and acidic residues: residues A32–K43 and D49–D89. Over residues G90–P102 the composition is skewed to low complexity. Positions G150 to A159 are enriched in basic and acidic residues. Phosphoserine is present on residues S169, S175, and S177. The span at G204–T214 shows a compositional bias: low complexity. Residues E215–K224 show a composition bias toward basic and acidic residues. One can recognise a Protein kinase domain in the interval L312–L567. ATP contacts are provided by residues L318–V326 and K341. D433 serves as the catalytic Proton acceptor. Residue T472 is modified to Phosphothreonine. The calmodulin-binding stretch occupies residues I601 to S613.

It belongs to the protein kinase superfamily. CAMK Ser/Thr protein kinase family. In terms of assembly, may interact with centrin.

The protein localises to the cytoplasm. The enzyme catalyses L-seryl-[myosin light chain] + ATP = O-phospho-L-seryl-[myosin light chain] + ADP + H(+). The catalysed reaction is L-threonyl-[myosin light chain] + ATP = O-phospho-L-threonyl-[myosin light chain] + ADP + H(+). Functionally, implicated in the level of global muscle contraction and cardiac function. Phosphorylates a specific serine in the N-terminus of a myosin light chain. This Bos taurus (Bovine) protein is Myosin light chain kinase 2, skeletal/cardiac muscle (MYLK2).